Reading from the N-terminus, the 175-residue chain is Transcriptional repressor NrdR (175 aa).

A zinc finger spans residues 3–32 (CPYCSHPDTKVIDSRDVDDGVRRRRECVVC). One can recognise an ATP-cone domain in the interval 47-137 (LFVVKKDQRR…VYREFTDITQ (91 aa)).

This sequence belongs to the NrdR family. Zn(2+) serves as cofactor.

Its function is as follows. Negatively regulates transcription of bacterial ribonucleotide reductase nrd genes and operons by binding to NrdR-boxes. In Dehalococcoides mccartyi (strain ATCC BAA-2266 / KCTC 15142 / 195) (Dehalococcoides ethenogenes (strain 195)), this protein is Transcriptional repressor NrdR.